The following is a 272-amino-acid chain: Methylesterase 8 (272 aa).

Residue Ser102 is the Acyl-ester intermediate of the active site. Residues Asp222 and His250 each act as charge relay system in the active site.

This sequence belongs to the AB hydrolase superfamily. Methylesterase family.

Methylesterase shown to have carboxylesterase activity in vitro. The protein is Methylesterase 8 of Arabidopsis thaliana (Mouse-ear cress).